A 118-amino-acid chain; its full sequence is Large ribosomal subunit protein uL24 (118 aa).

The protein belongs to the universal ribosomal protein uL24 family. Part of the 50S ribosomal subunit.

In terms of biological role, one of two assembly initiator proteins, it binds directly to the 5'-end of the 23S rRNA, where it nucleates assembly of the 50S subunit. Functionally, one of the proteins that surrounds the polypeptide exit tunnel on the outside of the subunit. The chain is Large ribosomal subunit protein uL24 from Prochlorococcus marinus (strain MIT 9515).